Here is a 466-residue protein sequence, read N- to C-terminus: Putative chitinase 2 (466 aa).

A signal peptide spans 1-17 (MYLTIWLVPLLAVGTWG). A GH18 domain is found at 20 to 380 (FNRFCHYNSW…MAVIHGLNAY (361 aa)). Cysteines 24 and 49 form a disulfide. The active-site Proton donor is the Glu141. Residues 395–447 (YNKKILRARVSLRNYRRRNQQGKVAEMEQRIRNLEQELQQSMGNMAYERQQAQ) are a coiled coil.

The protein belongs to the glycosyl hydrolase 18 family. In terms of tissue distribution, prismatic layer of shell (at protein level). Expressed primarily in the mantle with highest level in the mantle edge and lower level in the mantle pallium.

It localises to the secreted. It carries out the reaction Random endo-hydrolysis of N-acetyl-beta-D-glucosaminide (1-&gt;4)-beta-linkages in chitin and chitodextrins.. This chain is Putative chitinase 2, found in Margaritifera margaritifera (Freshwater pearl mussel).